The primary structure comprises 342 residues: Aspartate carbamoyltransferase catalytic subunit (342 aa).

Residues Arg-59 and Thr-60 each coordinate carbamoyl phosphate. Lys-87 contributes to the L-aspartate binding site. Residues Arg-109, His-142, and Gln-145 each coordinate carbamoyl phosphate. L-aspartate-binding residues include Arg-182 and Arg-253. Carbamoyl phosphate contacts are provided by Gly-294 and Pro-295.

The protein belongs to the aspartate/ornithine carbamoyltransferase superfamily. ATCase family. Heterododecamer (2C3:3R2) of six catalytic PyrB chains organized as two trimers (C3), and six regulatory PyrI chains organized as three dimers (R2).

It catalyses the reaction carbamoyl phosphate + L-aspartate = N-carbamoyl-L-aspartate + phosphate + H(+). It functions in the pathway pyrimidine metabolism; UMP biosynthesis via de novo pathway; (S)-dihydroorotate from bicarbonate: step 2/3. Catalyzes the condensation of carbamoyl phosphate and aspartate to form carbamoyl aspartate and inorganic phosphate, the committed step in the de novo pyrimidine nucleotide biosynthesis pathway. This Synechococcus sp. (strain WH7803) protein is Aspartate carbamoyltransferase catalytic subunit.